We begin with the raw amino-acid sequence, 382 residues long: Alkaline serine protease ver112 (382 aa).

The N-terminal stretch at 1–15 (MRLSIIAAVLPLALA) is a signal peptide. Positions 16–102 (APVAEPEIAP…IEQDAIFSIN (87 aa)) are excised as a propeptide. In terms of domain architecture, Inhibitor I9 spans 56 to 99 (SKIPGIERVYENVLNGFSATLSNEELERLRRDPDVESIEQDAIF). The Peptidase S8 domain occupies 111–382 (TWGLTRISHR…VNYLAFNGAT (272 aa)). Intrachain disulfides connect cysteine 138-cysteine 227 and cysteine 282-cysteine 353. Active-site charge relay system residues include aspartate 143, histidine 173, and serine 328.

It belongs to the peptidase S8 family.

It is found in the secreted. With respect to regulation, inhibited by phenylmethylsulfonyl fluoride (PMSF). Its function is as follows. Serine protease which can degrade the nematode cuticle. The protein is Alkaline serine protease ver112 of Corniculantispora psalliotae (Lecanicillium psalliotae).